Reading from the N-terminus, the 249-residue chain is uncharacterized protein (249 aa).

An ATP-binding site is contributed by G7–S14.

This is an uncharacterized protein from Methanocaldococcus jannaschii (strain ATCC 43067 / DSM 2661 / JAL-1 / JCM 10045 / NBRC 100440) (Methanococcus jannaschii).